Consider the following 147-residue polypeptide: Large ribosomal subunit protein uL15 (147 aa).

Positions 1-28 (MIRRRKKVRKLRGSHTHGWGCKKKHRGG) are enriched in basic residues. The segment at 1–43 (MIRRRKKVRKLRGSHTHGWGCKKKHRGGGSKGGRGMAGTGKRN) is disordered. A compositionally biased stretch (gly residues) spans 29–38 (GSKGGRGMAG).

The protein belongs to the universal ribosomal protein uL15 family. As to quaternary structure, part of the 50S ribosomal subunit.

Its function is as follows. Binds to the 23S rRNA. This Pyrococcus furiosus (strain ATCC 43587 / DSM 3638 / JCM 8422 / Vc1) protein is Large ribosomal subunit protein uL15.